The following is a 156-amino-acid chain: Protein E6 (156 aa).

Zinc fingers lie at residues 42–78 (CHYC…CSQC) and 115–151 (CVRC…CVRC).

It belongs to the papillomaviridae E6 protein family. In terms of assembly, forms homodimers. Interacts with ubiquitin-protein ligase UBE3A/E6-AP; this interaction stimulates UBE3A ubiquitin activity. Interacts with host BAK1.

It is found in the host cytoplasm. It localises to the host nucleus. Plays a major role in the induction and maintenance of cellular transformation. E6 associates with host UBE3A/E6-AP ubiquitin-protein ligase and modulates its activity. Protects host keratinocytes from apoptosis by mediating the degradation of host BAK1. May also inhibit host immune response. This Homo sapiens (Human) protein is Protein E6.